Consider the following 273-residue polypeptide: Eukaryotic translation initiation factor 3 subunit G-2 (273 aa).

Residues 193 to 271 (SAVRISNLSE…LILCVEWSKP (79 aa)) enclose the RRM domain.

Belongs to the eIF-3 subunit G family. Component of the eukaryotic translation initiation factor 3 (eIF-3) complex. The eIF-3 complex interacts with pix.

It localises to the cytoplasm. Functionally, RNA-binding component of the eukaryotic translation initiation factor 3 (eIF-3) complex, which is involved in protein synthesis of a specialized repertoire of mRNAs and, together with other initiation factors, stimulates binding of mRNA and methionyl-tRNAi to the 40S ribosome. The eIF-3 complex specifically targets and initiates translation of a subset of mRNAs involved in cell proliferation. This subunit can bind 18S rRNA. The polypeptide is Eukaryotic translation initiation factor 3 subunit G-2 (Drosophila melanogaster (Fruit fly)).